The chain runs to 206 residues: Ribosomal RNA large subunit methyltransferase E (206 aa).

Positions 60, 62, 80, 96, and 121 each coordinate S-adenosyl-L-methionine. K161 functions as the Proton acceptor in the catalytic mechanism.

It belongs to the class I-like SAM-binding methyltransferase superfamily. RNA methyltransferase RlmE family.

Its subcellular location is the cytoplasm. The catalysed reaction is uridine(2552) in 23S rRNA + S-adenosyl-L-methionine = 2'-O-methyluridine(2552) in 23S rRNA + S-adenosyl-L-homocysteine + H(+). Its function is as follows. Specifically methylates the uridine in position 2552 of 23S rRNA at the 2'-O position of the ribose in the fully assembled 50S ribosomal subunit. This is Ribosomal RNA large subunit methyltransferase E from Francisella tularensis subsp. tularensis (strain FSC 198).